Here is a 487-residue protein sequence, read N- to C-terminus: ATP-dependent RNA helicase DBP3 (487 aa).

The interval 1–40 is disordered; it reads MAKRSRNMESNSERSSRPKKKSKGDAKPEQPPYVQSAELD. A Q motif motif is present at residues 71–98; that stretch reads TAFSYLPSDSNQLYGPLEHFSKPTPIQS. Residues 101–276 enclose the Helicase ATP-binding domain; sequence WPYLFAGRDV…TTFMKEPVTV (176 aa). Position 114–121 (114–121) interacts with ATP; that stretch reads AETGSGKT. Residues 222-225 carry the DEAD box motif; the sequence is DEAD. The 166-residue stretch at 291–456 folds into the Helicase C-terminal domain; the sequence is RIKQIVEVVK…DIPEALLKFG (166 aa).

The protein belongs to the DEAD box helicase family. DDX5/DBP2 subfamily.

It is found in the nucleus. The protein localises to the nucleolus. The catalysed reaction is ATP + H2O = ADP + phosphate + H(+). ATP-dependent RNA helicase required for 60S ribosomal subunit synthesis. Involved in efficient pre-rRNA processing, predominantly at site A3, which is necessary for the normal formation of 25S and 5.8S rRNAs. This chain is ATP-dependent RNA helicase DBP3 (DBP3), found in Ajellomyces capsulatus (strain NAm1 / WU24) (Darling's disease fungus).